A 525-amino-acid chain; its full sequence is Protein kinase PINOID 2 (525 aa).

The interval 1–27 (MANSSIFYKDNESDYESSTVGPDSSRR) is disordered. Positions 87 to 465 (FRLLKRLGSG…SIEIKRHEFF (379 aa)) constitute a Protein kinase domain. Residues 93-101 (LGSGDIGSV) and Lys118 contribute to the ATP site. Asp214 serves as the catalytic Proton acceptor. In terms of domain architecture, AGC-kinase C-terminal spans 466–525 (EGVNWALIRSIKPPWVPKEETSHKTKGDNRSVNYYLPPRFMMSRKERNEPYHVSNYFDYF).

The protein belongs to the protein kinase superfamily. Ser/Thr protein kinase family.

The enzyme catalyses L-seryl-[protein] + ATP = O-phospho-L-seryl-[protein] + ADP + H(+). The catalysed reaction is L-threonyl-[protein] + ATP = O-phospho-L-threonyl-[protein] + ADP + H(+). In terms of biological role, serine/threonine-protein kinase involved in the regulation of auxin signaling. Plays a minor role in the regulation of cellular auxin efflux and cotyledon organogenesis. This Arabidopsis thaliana (Mouse-ear cress) protein is Protein kinase PINOID 2 (PID2).